The chain runs to 162 residues: 2-C-methyl-D-erythritol 2,4-cyclodiphosphate synthase (162 aa).

The a divalent metal cation site is built by Asp12 and His14. Residues 12-14 (DVH) and 38-39 (HS) each bind 4-CDP-2-C-methyl-D-erythritol 2-phosphate. His46 contacts a divalent metal cation. 4-CDP-2-C-methyl-D-erythritol 2-phosphate-binding positions include 60–62 (DIG), 136–139 (TTTE), Phe143, and Arg146.

Belongs to the IspF family. Homotrimer. Requires a divalent metal cation as cofactor.

The catalysed reaction is 4-CDP-2-C-methyl-D-erythritol 2-phosphate = 2-C-methyl-D-erythritol 2,4-cyclic diphosphate + CMP. It participates in isoprenoid biosynthesis; isopentenyl diphosphate biosynthesis via DXP pathway; isopentenyl diphosphate from 1-deoxy-D-xylulose 5-phosphate: step 4/6. Its function is as follows. Involved in the biosynthesis of isopentenyl diphosphate (IPP) and dimethylallyl diphosphate (DMAPP), two major building blocks of isoprenoid compounds. Catalyzes the conversion of 4-diphosphocytidyl-2-C-methyl-D-erythritol 2-phosphate (CDP-ME2P) to 2-C-methyl-D-erythritol 2,4-cyclodiphosphate (ME-CPP) with a corresponding release of cytidine 5-monophosphate (CMP). The chain is 2-C-methyl-D-erythritol 2,4-cyclodiphosphate synthase from Porphyromonas gingivalis (strain ATCC BAA-308 / W83).